Consider the following 234-residue polypeptide: STARD3 N-terminal-like protein (234 aa).

Methionine 1 is subject to N-acetylmethionine. Residues 1–53 are Cytoplasmic-facing; that stretch reads MNHLPEDMENALTGSQSSHASLRNIHSINPTQLMARIESYEGREKKGISDVRR. 3 positions are modified to phosphoserine: serine 15, serine 21, and serine 27. The 171-residue stretch at 48–218 folds into the MENTAL domain; it reads ISDVRRTFCL…YSPPESEAGS (171 aa). Residues 54–74 form a helical membrane-spanning segment; sequence TFCLFVTFDLLFVTLLWIIEL. The Extracellular segment spans residues 75 to 97; that stretch reads NVNGGIENTLEKEVMQYDYYSSY. Residues 98–118 traverse the membrane as a helical segment; sequence FDIFLLAVFRFKVLILAYAVC. Residues 119–122 are Cytoplasmic-facing; that stretch reads RLRH. A helical membrane pass occupies residues 123 to 143; the sequence is WWAIALTTAVTSAFLLAKVIL. Residues 144 to 150 lie on the Extracellular side of the membrane; it reads SKLFSQG. A helical membrane pass occupies residues 151–171; it reads AFGYVLPIISFILAWIETWFL. The Cytoplasmic portion of the chain corresponds to 172–234; it reads DFKVLPQEAE…QDSEKPLLEL (63 aa). Position 193 is a phosphoserine (serine 193). A disordered region spans residues 200–234; sequence PGGLSDGQFYSPPESEAGSEEAEEKQDSEKPLLEL. The FFAT signature appears at 208 to 213; it reads FYSPPE. Basic and acidic residues predominate over residues 224 to 234; the sequence is KQDSEKPLLEL.

The protein belongs to the STARD3 family. In terms of assembly, homodimer. Interacts (via the MENTAL domain) with STARD3NL. Interacts (via FFAT motif) with VAPA. Interacts (via FFAT motif) with VAPB. Interacts (via FFAT motif) with MOSPD2 (via MSP domain).

The protein localises to the late endosome membrane. Tethering protein that creates contact site between the endoplasmic reticulum and late endosomes: localizes to late endosome membranes and contacts the endoplasmic reticulum via interaction with VAPA and VAPB. This chain is STARD3 N-terminal-like protein, found in Homo sapiens (Human).